Here is a 63-residue protein sequence, read N- to C-terminus: Large ribosomal subunit protein uL29 (63 aa).

This sequence belongs to the universal ribosomal protein uL29 family.

The sequence is that of Large ribosomal subunit protein uL29 from Stutzerimonas stutzeri (strain A1501) (Pseudomonas stutzeri).